The primary structure comprises 98 residues: Large ribosomal subunit protein uL23 (98 aa).

Belongs to the universal ribosomal protein uL23 family. As to quaternary structure, part of the 50S ribosomal subunit. Contacts protein L29, and trigger factor when it is bound to the ribosome.

In terms of biological role, one of the early assembly proteins it binds 23S rRNA. One of the proteins that surrounds the polypeptide exit tunnel on the outside of the ribosome. Forms the main docking site for trigger factor binding to the ribosome. The chain is Large ribosomal subunit protein uL23 from Parafrankia sp. (strain EAN1pec).